A 366-amino-acid chain; its full sequence is UDP-N-acetylglucosamine--N-acetylmuramyl-(pentapeptide) pyrophosphoryl-undecaprenol N-acetylglucosamine transferase (366 aa).

UDP-N-acetyl-alpha-D-glucosamine contacts are provided by residues 14–16 (TGG), asparagine 125, arginine 168, serine 196, and glutamine 297.

This sequence belongs to the glycosyltransferase 28 family. MurG subfamily.

It is found in the cell inner membrane. The catalysed reaction is di-trans,octa-cis-undecaprenyl diphospho-N-acetyl-alpha-D-muramoyl-L-alanyl-D-glutamyl-meso-2,6-diaminopimeloyl-D-alanyl-D-alanine + UDP-N-acetyl-alpha-D-glucosamine = di-trans,octa-cis-undecaprenyl diphospho-[N-acetyl-alpha-D-glucosaminyl-(1-&gt;4)]-N-acetyl-alpha-D-muramoyl-L-alanyl-D-glutamyl-meso-2,6-diaminopimeloyl-D-alanyl-D-alanine + UDP + H(+). Its pathway is cell wall biogenesis; peptidoglycan biosynthesis. Its function is as follows. Cell wall formation. Catalyzes the transfer of a GlcNAc subunit on undecaprenyl-pyrophosphoryl-MurNAc-pentapeptide (lipid intermediate I) to form undecaprenyl-pyrophosphoryl-MurNAc-(pentapeptide)GlcNAc (lipid intermediate II). In Bradyrhizobium diazoefficiens (strain JCM 10833 / BCRC 13528 / IAM 13628 / NBRC 14792 / USDA 110), this protein is UDP-N-acetylglucosamine--N-acetylmuramyl-(pentapeptide) pyrophosphoryl-undecaprenol N-acetylglucosamine transferase.